The chain runs to 597 residues: ATP-dependent lipid A-core flippase (597 aa).

The next 6 membrane-spanning stretches (helical) occupy residues 26–46 (WIFA…TGLA), 65–85 (IQII…ANFI), 144–164 (ILTI…MAYL), 166–186 (GLLT…IWWV), 250–270 (AISQ…VIHL), and 276–296 (MLAQ…MLLL). Residues 29-311 (AASIITMAIY…LTKINGTLQR (283 aa)) enclose the ABC transmembrane type-1 domain. Positions 343 to 579 (IRFEHLSFCY…ESHYAGLYRL (237 aa)) constitute an ABC transporter domain. Residue 377–384 (GHSGSGKS) coordinates ATP.

It belongs to the ABC transporter superfamily. Lipid exporter (TC 3.A.1.106) family. As to quaternary structure, homodimer.

The protein resides in the cell inner membrane. It carries out the reaction ATP + H2O + lipid A-core oligosaccharideSide 1 = ADP + phosphate + lipid A-core oligosaccharideSide 2.. Its function is as follows. Involved in lipopolysaccharide (LPS) biosynthesis. Translocates lipid A-core from the inner to the outer leaflet of the inner membrane. Transmembrane domains (TMD) form a pore in the inner membrane and the ATP-binding domain (NBD) is responsible for energy generation. The chain is ATP-dependent lipid A-core flippase from Nitrosococcus oceani (strain ATCC 19707 / BCRC 17464 / JCM 30415 / NCIMB 11848 / C-107).